The primary structure comprises 98 residues: Large ribosomal subunit protein uL23c (98 aa).

It belongs to the universal ribosomal protein uL23 family. Part of the 50S ribosomal subunit.

The protein resides in the plastid. Its function is as follows. Binds to 23S rRNA. This Euglena longa (Euglenophycean alga) protein is Large ribosomal subunit protein uL23c (rpl23).